The chain runs to 338 residues: Glycerol-3-phosphate dehydrogenase [NAD(P)+] (338 aa).

Residues serine 13, tryptophan 14, and lysine 108 each coordinate NADPH. Positions 108, 139, and 141 each coordinate sn-glycerol 3-phosphate. An NADPH-binding site is contributed by alanine 143. Sn-glycerol 3-phosphate is bound by residues lysine 194, aspartate 247, serine 257, arginine 258, and asparagine 259. Catalysis depends on lysine 194, which acts as the Proton acceptor. Arginine 258 provides a ligand contact to NADPH. The NADPH site is built by valine 282 and glutamate 284.

The protein belongs to the NAD-dependent glycerol-3-phosphate dehydrogenase family.

The protein resides in the cytoplasm. The catalysed reaction is sn-glycerol 3-phosphate + NAD(+) = dihydroxyacetone phosphate + NADH + H(+). It carries out the reaction sn-glycerol 3-phosphate + NADP(+) = dihydroxyacetone phosphate + NADPH + H(+). The protein operates within membrane lipid metabolism; glycerophospholipid metabolism. Functionally, catalyzes the reduction of the glycolytic intermediate dihydroxyacetone phosphate (DHAP) to sn-glycerol 3-phosphate (G3P), the key precursor for phospholipid synthesis. This is Glycerol-3-phosphate dehydrogenase [NAD(P)+] from Streptococcus pneumoniae serotype 19F (strain G54).